A 329-amino-acid polypeptide reads, in one-letter code: Isopenicillin N synthase (329 aa).

Isopenicillin N is bound by residues Arg-87, Tyr-91, Ser-183, and Tyr-189. N-[(5S)-5-amino-5-carboxypentanoyl]-L-cysteinyl-D-valine is bound by residues Arg-87, Tyr-91, Ser-183, Tyr-189, His-212, and Asp-214. The region spanning 180-286 (TLSSVSLIRY…RLSLPFFLNA (107 aa)) is the Fe2OG dioxygenase domain. Fe(2+)-binding residues include His-212, Asp-214, and His-268. Residue Arg-277 coordinates 2-oxoglutarate. Ser-279 contributes to the isopenicillin N binding site. N-[(5S)-5-amino-5-carboxypentanoyl]-L-cysteinyl-D-valine is bound at residue Ser-279.

This sequence belongs to the iron/ascorbate-dependent oxidoreductase family. It depends on Fe cation as a cofactor. Requires L-ascorbate as cofactor.

It catalyses the reaction N-[(5S)-5-amino-5-carboxypentanoyl]-L-cysteinyl-D-valine + O2 = isopenicillin N + 2 H2O. It participates in antibiotic biosynthesis; penicillin G biosynthesis; penicillin G from L-alpha-aminoadipate and L-cysteine and L-valine: step 2/3. Removes, in the presence of oxygen, 4 hydrogen atoms from delta-L-(alpha-aminoadipyl)-L-cysteinyl-D-valine (ACV) to form the azetidinone and thiazolidine rings of isopenicillin. The protein is Isopenicillin N synthase (pcbC) of Streptomyces jumonjinensis.